Here is a 588-residue protein sequence, read N- to C-terminus: Vicilin C72 (588 aa).

An N-terminal signal peptide occupies residues 1–25; it reads MVRNKSACVVLLFSLFLSFGLLCSA. Disordered regions lie at residues 159 to 183 and 460 to 487; these read RERE…NPFH and PRQS…GQYR. Over residues 163 to 175 the composition is skewed to acidic residues; that stretch reads EEAEEEETEEGEQ. Cupin type-1 domains follow at residues 182 to 340 and 386 to 566; these read FHFH…EQLD and FNLL…RLVD. Residues 465 to 478 are compositionally biased toward acidic residues; the sequence is FEEEEEQQQEQEQE.

This sequence belongs to the 7S seed storage protein family.

It localises to the vacuole. It is found in the aleurone grain. Functionally, seed storage protein. This is Vicilin C72 from Gossypium hirsutum (Upland cotton).